Reading from the N-terminus, the 821-residue chain is Frameshifted structural polyprotein (821 aa).

The disordered stretch occupies residues 1–106 (MNRGFFNMLG…KPKPGKRQRM (106 aa)). The segment covering 38 to 49 (LASQIQQLTTAV) has biased composition (polar residues). The span at 67-106 (PPPRQKKQAPKQPPKPKKPKTQEKKKKQPAKPKPGKRQRM) shows a compositional bias: basic residues. Residues 93 to 101 (KQPAKPKPG) form a ribosome-binding region. In terms of domain architecture, Peptidase S3 spans 114 to 264 (RLFDVKNEDG…KTTPEGTEEW (151 aa)). Active-site charge relay system residues include histidine 141, aspartate 163, and serine 215. A functions as an uncleaved signal peptide for the precursor of protein E3/E2 region spans residues 265-279 (SAAPLVTAMCLLGNV). Asparagine 278 is a glycosylation site (N-linked (GlcNAc...) asparagine; by host). Cysteines 283 and 289 form a disulfide. 2 N-linked (GlcNAc...) asparagine; by host glycosylation sites follow: asparagine 524 and asparagine 646. A helical membrane pass occupies residues 696 to 716 (ILAVASATVAMMIGVTVAVLC). 3 S-palmitoyl cysteine; by host lipidation sites follow: cysteine 724, cysteine 744, and cysteine 745. Helical transmembrane passes span 726–746 (TPYA…LCCV) and 764–784 (NSQP…IVLM).

Belongs to the alphavirus frameshifted structural polyprotein family. In terms of assembly, homomultimer. Interacts with host karyopherin KPNA4; this interaction allows the nuclear import of the viral capsid protein. Interacts with spike glycoprotein E2. Interacts with host IRAK1; the interaction leads to inhibition of IRAK1-dependent signaling. The precursor of protein E3/E2 and E1 form a heterodimer shortly after synthesis. As to quaternary structure, processing of the precursor of protein E3/E2 into E2 and E3 results in a heterodimer of the spike glycoproteins E2 and E1. Spike at virion surface are constituted of three E2-E1 heterodimers. Specific enzymatic cleavages in vivo yield mature proteins. Capsid protein is auto-cleaved during polyprotein translation, unmasking a signal peptide at the N-terminus of the precursor of E3/E2. The remaining polyprotein is then targeted to the host endoplasmic reticulum, where host signal peptidase cleaves it into pE2 and TF. pE2 is further processed to mature E3 and E2 by host furin in trans-Golgi vesicle. Post-translationally, palmitoylated via thioester bonds. These palmitoylations may induce disruption of the C-terminus transmembrane. This would result in the reorientation of E2 C-terminus from lumenal to cytoplasmic side. In terms of processing, palmitoylated via thioester bonds.

It localises to the virion. Its subcellular location is the host cytoplasm. The protein resides in the host cell membrane. It is found in the host nucleus. The protein localises to the virion membrane. The catalysed reaction is Autocatalytic release of the core protein from the N-terminus of the togavirus structural polyprotein by hydrolysis of a -Trp-|-Ser- bond.. Functionally, forms an icosahedral capsid with a T=4 symmetry composed of 240 copies of the capsid protein surrounded by a lipid membrane through which penetrate 80 spikes composed of trimers of E1-E2 heterodimers. The capsid protein binds to the viral RNA genome at a site adjacent to a ribosome binding site for viral genome translation following genome release. Possesses a protease activity that results in its autocatalytic cleavage from the nascent structural protein. Following its self-cleavage, the capsid protein transiently associates with ribosomes, and within several minutes the protein binds to viral RNA and rapidly assembles into icosahedric core particles. The resulting nucleocapsid eventually associates with the cytoplasmic domain of the spike glycoprotein E2 at the cell membrane, leading to budding and formation of mature virions. In case of infection, new virions attach to target cells and after clathrin-mediated endocytosis their membrane fuses with the host endosomal membrane. This leads to the release of the nucleocapsid into the cytoplasm, followed by an uncoating event necessary for the genomic RNA to become accessible. The uncoating might be triggered by the interaction of capsid proteins with ribosomes. Binding of ribosomes would release the genomic RNA since the same region is genomic RNA-binding and ribosome-binding. Specifically inhibits interleukin-1 receptor-associated kinase 1/IRAK1-dependent signaling during viral entry, representing a means by which the alphaviruses may evade innate immune detection and activation prior to viral gene expression. In terms of biological role, provides the signal sequence for the translocation of the precursor of protein E3/E2 to the host endoplasmic reticulum. Furin-cleaved E3 remains associated with spike glycoprotein E1 and mediates pH protection of the latter during the transport via the secretory pathway. After virion release from the host cell, the assembly protein E3 is gradually released in the extracellular space. Plays an essential role in viral attachment to target host cell, by binding to the cell receptor. Synthesized as a pE2 precursor which is processed by furin at the cell membrane just before virion budding, giving rise to E2-E1 heterodimer. The pE2-E1 heterodimer is stable, whereas E2-E1 is unstable and dissociate at low pH. pE2 is processed at the last step, presumably to avoid E1 fusion activation before its final export to cell surface. E2 C-terminus contains a transitory transmembrane that would be disrupted by palmitoylation, resulting in reorientation of the C-terminal tail from lumenal to cytoplasmic side. This step is critical since E2 C-terminus is involved in budding by interacting with capsid proteins. This release of E2 C-terminus in cytoplasm occurs lately in protein export, and precludes premature assembly of particles at the endoplasmic reticulum membrane. Its function is as follows. Plays a role in viral assembly and release. The sequence is that of Frameshifted structural polyprotein from Sindbis virus (SINV).